A 130-amino-acid chain; its full sequence is Small ribosomal subunit protein uS9 (130 aa).

The protein belongs to the universal ribosomal protein uS9 family.

This Streptococcus agalactiae serotype Ia (strain ATCC 27591 / A909 / CDC SS700) protein is Small ribosomal subunit protein uS9.